We begin with the raw amino-acid sequence, 301 residues long: Golgi to ER traffic protein 2 (301 aa).

Residues Met1 to Leu167 are Cytoplasmic-facing. Residues Ser42 to Val55 show a composition bias toward low complexity. Positions Ser42–Pro93 are disordered. Positions Leu56–Asp67 are enriched in basic and acidic residues. The helical transmembrane segment at Trp168 to Tyr188 threads the bilayer. The Lumenal segment spans residues Thr189–Asp214. The chain crosses the membrane as a helical span at residues Phe215–Phe234. Residues His235–Glu278 lie on the Cytoplasmic side of the membrane. The helical transmembrane segment at Leu279–Phe299 threads the bilayer. At Ala300 to Asn301 the chain is on the lumenal side.

This sequence belongs to the GET2 family. Component of the Golgi to ER traffic (GET) complex, which is composed of GET1, GET2 and GET3. Within the complex, GET1 and GET2 form a heterotetramer which is stabilized by phosphatidylinositol binding and which binds to the GET3 homodimer.

It is found in the endoplasmic reticulum membrane. It localises to the golgi apparatus membrane. Required for the post-translational delivery of tail-anchored (TA) proteins to the endoplasmic reticulum. Together with GET1, acts as a membrane receptor for soluble GET3, which recognizes and selectively binds the transmembrane domain of TA proteins in the cytosol. The GET complex cooperates with the HDEL receptor ERD2 to mediate the ATP-dependent retrieval of resident ER proteins that contain a C-terminal H-D-E-L retention signal from the Golgi to the ER. This chain is Golgi to ER traffic protein 2, found in Candida dubliniensis (strain CD36 / ATCC MYA-646 / CBS 7987 / NCPF 3949 / NRRL Y-17841) (Yeast).